The primary structure comprises 1607 residues: MFLRSDLAVTHWVSRSMRKLFLVLSLLLSQAAHLEGRKDNQFLWKTGPWGRCAGDCGPGGAQSRAVWCFHIEGWTSPMSNCDESSQPPKERSCFRVCDWHSDLFQWEVSDWHRCLLVPGAQGEPRPRAVECVTAQHGLQHRTVRCLQKLNRTMVSNEICEHFAPQPPTEQACLIPCPRDCVVSEFSPWSTCPEGCGKKLQHRTRVAIAPPLYGGLQCPNLTESRACEAPVSCPLGKEEYSFSLKVGPWSKCRLPHLKEVDLSGRNIQDFSSDSNEQVTLTHQSYKAHHHSQPGDVVIGFQTRQVWCTRSDGRNALLSLCVRDSFPLTVQPCVMPKDCETSEWSPWSPCSKTCRSGTLSPGVRSRSRNVKHIAIGGGQECPELLEKETCIAEGEFLQPCPRYSWRTSEWKECQVSLLLEQHDPLWHETGPICGGGIQTREVYCAQSLPATIASRTKEVSRPVERTLCLGPAPSASQLCNVPCSMDCIVSSWSTWGPCVFENCHDPQGKKGFRMRQRHVLMESTGPMGRCPHLAESVPCEDPMCHRWLASEGICIADHGKCGLGHRILKAVCQNERGEEVSGGLCPVPPPPERMACEIPCRMDCVVSEWTVWSSCSQSCSNKNSDGKQTRSRSILALAGEGGKTCPSSQELQEYRLCNDHSCTQLYWETSAWGSCSENTLVTALNVTIGWNGEATCGVGIQTRKVFCIKSHVGQVMTKRCPESTRPETVRPCFLPCKKDCLVTAFSEWTPCPRPCQPGNTTIKQSRYRIIIQEAANGGQECPDTLFEERECEDISLCPSYRWKPQKWSSCILVPESIRQGRTGTSEACGKGLQTRAVSCISDDNQSAEMTECLKQMNGMPPLVQECTIPCRDDCTFTPWSKFTPCSKNCEATQIRRRQLTGKSRKKEKCQDASLYPLVEMEPCPCDTFMSHPYGNWSACILPEGKRDAQQGGLWVQGDDKECGEGVRFRAIACSNINGRPVDPSFCNSSGYIQEACVIPCPFDCKLSDWSSWGSCSSSCGIGVRIRSKWLKEKPYSGGRPCPKLDLKNQVHEAVPCYSECDQYSWVVEHWSPCKINNELRSPRCGRGTQSRRIRCVSTADREGGAVNRSLCNQDDAPQETQACSLLCPSECVMSEWGTWSRCPQSCDPHAMQRRTRHLLRPSLNSRTCGEDSQVRPCLLNENCFQFQYNLTEWSTCQLSENVSCGQGVRTRLLSCVRSDGKSVSMDHCEQRNLEKPQRMSIPCLVECVVNCQLSGWTTWTECSQTCGQGGRMSRTRFIIMPTQGEGRQCPTELTQQKPCPVTPCYSWVLGNWSACKLEGGDCGEGVQVRSFSCVVHNGSISHTAVPVEEALCGEVPFQEGILKQLCSVPCPGDCHITPWSEWSKCELTCIDGRSFETTGRQSRSRTFIIQSFENQDSCPQQVLETRPCTGGKCYHYIWKASLWNNNERTVWCQRSDGLNVTGGCSPQARPAAIRQCIPACKKPFSYCTQGGVCGCEKGYTEIMRSSGFLDYCMKVPGSEDKKADVKNLSGKNRPVNSKIHDIFKGWSLQPLDPDGRVKMWVYGVSGGSFLIMIFLVFTSYLVCKKPKPHQSTPRHQKPLTLAYDGDLDM.

Positions 1-31 (MFLRSDLAVTHWVSRSMRKLFLVLSLLLSQA) are cleaved as a signal peptide. The Extracellular segment spans residues 32-1556 (AHLEGRKDNQ…QPLDPDGRVK (1525 aa)). TSP type-1 domains lie at 40-98 (NQFL…RVCD), 102-177 (DLFQ…IPCP), 179-233 (DCVV…VSCP), 336-392 (DCET…IAEG), 399-482 (PRYS…VPCS), 484-543 (DCIV…PMCH), 601-661 (DCVV…HSCT), 662-735 (QLYW…LPCK), 737-796 (DCLV…SLCP), 797-869 (SYRW…IPCR), 871-924 (DCTF…CPCD), 925-999 (TFMS…IPCP), 1001-1126 (DCKL…LLCP), 1128-1182 (ECVM…ENCF), 1183-1246 (QFQY…VECV), 1248-1303 (NCQL…TPCY), 1304-1369 (SWVL…VPCP), and 1371-1432 (DCHI…GKCY). Residues asparagine 150 and asparagine 219 are each glycosylated (N-linked (GlcNAc...) asparagine). Disulfide bonds link cysteine 411–cysteine 477, cysteine 431–cysteine 481, and cysteine 442–cysteine 466. 3 disulfide bridges follow: cysteine 602–cysteine 643, cysteine 613–cysteine 617, and cysteine 655–cysteine 660. N-linked (GlcNAc...) asparagine glycosylation occurs at asparagine 683. 3 disulfides stabilise this stretch: cysteine 738–cysteine 779, cysteine 749–cysteine 753, and cysteine 789–cysteine 795. A glycan (N-linked (GlcNAc...) asparagine) is linked at asparagine 757. An N-linked (GlcNAc...) asparagine glycan is attached at asparagine 842. Asparagine 933 is a glycosylation site (N-linked (GlcNAc...) asparagine). Disulfide bonds link cysteine 937-cysteine 994, cysteine 960-cysteine 998, cysteine 971-cysteine 984, cysteine 1002-cysteine 1039, and cysteine 1013-cysteine 1017. A glycan (N-linked (GlcNAc...) asparagine) is linked at asparagine 985. Residue asparagine 1105 is glycosylated (N-linked (GlcNAc...) asparagine). A disulfide bridge connects residues cysteine 1121 and cysteine 1125. N-linked (GlcNAc...) asparagine glycosylation is found at asparagine 1187 and asparagine 1199. 3 disulfide bridges follow: cysteine 1249-cysteine 1287, cysteine 1260-cysteine 1264, and cysteine 1297-cysteine 1302. N-linked (GlcNAc...) asparagine glycosylation is found at asparagine 1309 and asparagine 1335. Disulfide bonds link cysteine 1372–cysteine 1416, cysteine 1383–cysteine 1387, and cysteine 1426–cysteine 1431. N-linked (GlcNAc...) asparagine glycans are attached at residues asparagine 1457 and asparagine 1525. A helical membrane pass occupies residues 1557–1577 (MWVYGVSGGSFLIMIFLVFTS). Residues 1578 to 1607 (YLVCKKPKPHQSTPRHQKPLTLAYDGDLDM) are Cytoplasmic-facing.

It is found in the membrane. This Mus musculus (Mouse) protein is Thrombospondin type-1 domain-containing protein 7B.